Consider the following 285-residue polypeptide: RNA polymerase sigma factor RpoH (285 aa).

The tract at residues 53-122 (LILSHLRFVV…IHEYVLRNWR (70 aa)) is sigma-70 factor domain-2. An Interaction with polymerase core subunit RpoC motif is present at residues 77 to 80 (DLIQ). Residues 229–281 (AMEGLDERSQDIIRARWLDEDNKSTLQELADRYGVSAERVRQLEKNAMKKLRA) are sigma-70 factor domain-4. The segment at residues 254–273 (LQELADRYGVSAERVRQLEK) is a DNA-binding region (H-T-H motif).

This sequence belongs to the sigma-70 factor family. RpoH subfamily. In terms of assembly, interacts with the RNA polymerase core enzyme.

Its subcellular location is the cytoplasm. Functionally, sigma factors are initiation factors that promote the attachment of RNA polymerase to specific initiation sites and are then released. This sigma factor is involved in regulation of expression of heat shock genes. This chain is RNA polymerase sigma factor RpoH, found in Enterobacter cloacae.